The primary structure comprises 86 residues: Translation initiation factor IF-1 (86 aa).

The region spanning M1–K72 is the S1-like domain.

This sequence belongs to the IF-1 family. In terms of assembly, component of the 30S ribosomal translation pre-initiation complex which assembles on the 30S ribosome in the order IF-2 and IF-3, IF-1 and N-formylmethionyl-tRNA(fMet); mRNA recruitment can occur at any time during PIC assembly.

Its subcellular location is the cytoplasm. Functionally, one of the essential components for the initiation of protein synthesis. Stabilizes the binding of IF-2 and IF-3 on the 30S subunit to which N-formylmethionyl-tRNA(fMet) subsequently binds. Helps modulate mRNA selection, yielding the 30S pre-initiation complex (PIC). Upon addition of the 50S ribosomal subunit IF-1, IF-2 and IF-3 are released leaving the mature 70S translation initiation complex. The polypeptide is Translation initiation factor IF-1 (Pseudothermotoga lettingae (strain ATCC BAA-301 / DSM 14385 / NBRC 107922 / TMO) (Thermotoga lettingae)).